The following is a 627-amino-acid chain: F-box only protein 21 (627 aa).

The F-box domain occupies 27–76 (PSCLVQLPGEVLEYILCSGSLTALDIGRVSSTCRRLREVCQSSGQVWKEQ).

In terms of assembly, directly interacts with SKP1 and CUL1.

Its function is as follows. Substrate-recognition component of the SCF (SKP1-CUL1-F-box protein)-type E3 ubiquitin ligase complex. In Mus musculus (Mouse), this protein is F-box only protein 21 (Fbxo21).